Consider the following 821-residue polypeptide: Dapper homolog 1 (821 aa).

Residues 88–136 (LNTEEKLLEENILLLRKQLNCLRRRDAGLINQLQELDRQISDLRLDTET) adopt a coiled-coil conformation. Disordered stretches follow at residues 288–312 (SKPGEALNDEQKPEQVVGSQTSSWH), 386–432 (QDAS…STTN), 564–615 (NSAS…KTKR), and 627–655 (ERHTSSSGARSSAQRHHGHHRHHEAVLAK). Residues 388-400 (ASATSTEPSTASP) are compositionally biased toward low complexity. Polar residues predominate over residues 401 to 432 (QRQWSAESKGGTPQNGAYLSSSQPQNSYSTTN). Basic residues-rich tracts occupy residues 584–593 (DKHRTGSRRT), 601–615 (HLHKSSKKASAKTKR), and 639–649 (AQRHHGHHRHH). The short motif at 818 to 821 (MTTV) is the PDZ-binding element.

This sequence belongs to the dapper family. In terms of assembly, interacts with dvl2.

Its subcellular location is the cytoplasm. Functionally, involved in regulation of intracellular signaling pathways during development. Specifically thought to play a role in canonical and/or non-canonical Wnt signaling pathways through interaction with DSH (Dishevelled) family proteins. Binds to dvl2 and may regulate the degradation of ctnnb1/beta-catenin, thereby modulating the transcriptional activation of target genes of the Wnt signaling pathway. Seems to activate the canonical Wnt signaling pathway. This Danio rerio (Zebrafish) protein is Dapper homolog 1 (dact1).